A 1408-amino-acid chain; its full sequence is MPTQIQNNFRVRKTFAKIAKIIDIPNLINIQKQSYEKFLQADIAADKREDLGLQGVFKSVFPIRDFNETSSLEFVSYHLERPKYDVDECHQRGMTYSAPIKVVVRLVVWDKDEETGAQSIRDVKEQEVYFGEIPLMTQNGTFIINGTERVVVSQLHRSPGAFFDHDKGKSHSSGKLLYNARIIPYRGSWIDFEFDHKDLLYVRIDRRRKLPATVLIRALGAVPDTAKKNPLEFKGSTEEILNYYYATETIYLHSAEEFEKSVELELLPGQRATRDIKAKTGELIVKKNRKFTRAAIKKLEAAKMKTLPIDADELFTKVSAYDVVEETNGVVLLECNEEVTQEKVDELLKHGIKEFKVLFIDNLNVGPYLRETLMLDKLETPEQSIMEIYRRLRPGDPPTPETAINLFTNLFFNPERYDLSKVGRLKLNFKFGLEEPLDGQILTKRDILEVIRYLIDLKNGKGTIDDIDHLGNRRVRAVGELLENQYRIGLVRMERAIKERMSLQEIETLMPHDLINAKPVTAVIKEFFGSSQLSQFMDQTNPLSEVTHKRRLSALGPGGLTRERAGFEVRDVHPTHYGRICPIETPEGPNIGLIASLSTYARVNEFGFVETPYRKVEAGVVTNDVAFYSALEEEKHTIAQANAETDKKGKFANALVSSRRGGEFVQARAEDVDLMDVSPKQLVSVAASLIPFLENDDANRALMGSNMQRQAVPLLRTAAPLVGTGIESIVARDSGVTCVARRDGIVESVDAGRIVVKADVPASLSDVTSEVDIYNLLKYQRSNQNTCLNQKPIISKGDRVMKGDVIADGPATETGELALGQNVVVAFMPWQGYNFEDSILISERILKDDVFTSIHIEEFECIARDTKLGKEEITRDIPNVGEEALKDLDESGIIRIGAEVKPGDVLVGKITPKGETQLSPEEKLLRAIFGEKAGDVRDSSLRVPPGVVGTVINAKVFSRKGVEKDERAKQIESMEEAKLLKDQNDEIKVLQDSAFGRIRGLVRTKEVQGKLVDDKGKILLKKGDILDDELLSTVPYKYWGEISVGDPLDSRLRDILRNLEETKEAVKLAFGEKIARIKKGDELPPGVIKMVKVYVAIKRKLAVGDKMAGRHGNKGVVSRILPEEDMPYLEDGRPVDIVLNPLGVPSRMNIGQILETHLGWAAKGTGEALQRYVEANWSSDAIKERLKVIYSDPAFGEFLDKLDDEEIKQLCLRSKRGIHVATPVFDGAQETEIHALLDEGQLPRSGQMVLFDGRTGEPFDQNVTVGVMYMLKLHHLVDEKIHARSIGPYSLVTQQPLGGKAQFGGQRLGEMEVWAMEAYGAAYTLQEFLTVKSDDVVGRTRMYEAIVKGDNVLESGLPESFNVLLKELQSLALDVELLESAPPERQRSFGGDFLGGGDGEERKTGTEA.

A disordered region spans residues 1383 to 1408 (PERQRSFGGDFLGGGDGEERKTGTEA). The span at 1399–1408 (GEERKTGTEA) shows a compositional bias: basic and acidic residues.

It belongs to the RNA polymerase beta chain family. In terms of assembly, the RNAP catalytic core consists of 2 alpha, 1 beta, 1 beta' and 1 omega subunit. When a sigma factor is associated with the core the holoenzyme is formed, which can initiate transcription.

It catalyses the reaction RNA(n) + a ribonucleoside 5'-triphosphate = RNA(n+1) + diphosphate. In terms of biological role, DNA-dependent RNA polymerase catalyzes the transcription of DNA into RNA using the four ribonucleoside triphosphates as substrates. This Myxococcus xanthus (strain DK1622) protein is DNA-directed RNA polymerase subunit beta.